The sequence spans 406 residues: Tryptophan synthase beta chain (406 aa).

Lys-99 is modified (N6-(pyridoxal phosphate)lysine).

It belongs to the TrpB family. In terms of assembly, tetramer of two alpha and two beta chains. It depends on pyridoxal 5'-phosphate as a cofactor.

The catalysed reaction is (1S,2R)-1-C-(indol-3-yl)glycerol 3-phosphate + L-serine = D-glyceraldehyde 3-phosphate + L-tryptophan + H2O. The protein operates within amino-acid biosynthesis; L-tryptophan biosynthesis; L-tryptophan from chorismate: step 5/5. In terms of biological role, the beta subunit is responsible for the synthesis of L-tryptophan from indole and L-serine. This chain is Tryptophan synthase beta chain, found in Rhizobium meliloti (strain 1021) (Ensifer meliloti).